A 711-amino-acid chain; its full sequence is Ribosomal RNA large subunit methyltransferase K/L (711 aa).

In terms of domain architecture, THUMP spans 43 to 154; that stretch reads TLYRTLLWSR…RENLVISLDL (112 aa).

It belongs to the methyltransferase superfamily. RlmKL family.

It is found in the cytoplasm. The enzyme catalyses guanosine(2445) in 23S rRNA + S-adenosyl-L-methionine = N(2)-methylguanosine(2445) in 23S rRNA + S-adenosyl-L-homocysteine + H(+). The catalysed reaction is guanosine(2069) in 23S rRNA + S-adenosyl-L-methionine = N(2)-methylguanosine(2069) in 23S rRNA + S-adenosyl-L-homocysteine + H(+). Its function is as follows. Specifically methylates the guanine in position 2445 (m2G2445) and the guanine in position 2069 (m7G2069) of 23S rRNA. The sequence is that of Ribosomal RNA large subunit methyltransferase K/L from Haemophilus influenzae (strain PittEE).